Consider the following 632-residue polypeptide: Probable potassium transport system protein Kup 1 (632 aa).

Transmembrane regions (helical) follow at residues 17–37 (LFYL…TSPL), 60–80 (LISL…VLFL), 106–126 (TAIL…DAMI), 146–166 (LADY…VVQS), 175–195 (FFGP…ISHI), 210–230 (AVAF…AVFL), 254–274 (WFLL…ALVL), 292–312 (ALLP…QAVI), 344–364 (IFVP…VLGF), 370–390 (LATA…IMAF), 401–421 (LPVA…FLGA), and 426–446 (IHDG…VMWT).

It belongs to the HAK/KUP transporter (TC 2.A.72) family.

It is found in the cell inner membrane. The catalysed reaction is K(+)(in) + H(+)(in) = K(+)(out) + H(+)(out). Transport of potassium into the cell. Likely operates as a K(+):H(+) symporter. In Rhizobium johnstonii (strain DSM 114642 / LMG 32736 / 3841) (Rhizobium leguminosarum bv. viciae), this protein is Probable potassium transport system protein Kup 1.